The chain runs to 291 residues: Nucleotide-binding protein jk1004 (291 aa).

16 to 23 (GMSGAGRR) contributes to the ATP binding site. 67–70 (DVRS) is a GTP binding site.

This sequence belongs to the RapZ-like family.

Functionally, displays ATPase and GTPase activities. This Corynebacterium jeikeium (strain K411) protein is Nucleotide-binding protein jk1004.